The sequence spans 85 residues: UPF0297 protein CLL_A1175 (85 aa).

This sequence belongs to the UPF0297 family.

This is UPF0297 protein CLL_A1175 from Clostridium botulinum (strain Eklund 17B / Type B).